We begin with the raw amino-acid sequence, 1420 residues long: DNA-directed RNA polymerase subunit beta'' (1420 aa).

Residues Cys-220, Cys-295, Cys-302, and Cys-305 each contribute to the Zn(2+) site.

Belongs to the RNA polymerase beta' chain family. RpoC2 subfamily. In terms of assembly, in plastids the minimal PEP RNA polymerase catalytic core is composed of four subunits: alpha, beta, beta', and beta''. When a (nuclear-encoded) sigma factor is associated with the core the holoenzyme is formed, which can initiate transcription. Zn(2+) serves as cofactor.

Its subcellular location is the plastid. The protein resides in the chloroplast. The enzyme catalyses RNA(n) + a ribonucleoside 5'-triphosphate = RNA(n+1) + diphosphate. In terms of biological role, DNA-dependent RNA polymerase catalyzes the transcription of DNA into RNA using the four ribonucleoside triphosphates as substrates. This is DNA-directed RNA polymerase subunit beta'' from Adiantum capillus-veneris (Maidenhair fern).